The chain runs to 208 residues: ATP phosphoribosyltransferase (208 aa).

It belongs to the ATP phosphoribosyltransferase family. Short subfamily. As to quaternary structure, heteromultimer composed of HisG and HisZ subunits.

It is found in the cytoplasm. The catalysed reaction is 1-(5-phospho-beta-D-ribosyl)-ATP + diphosphate = 5-phospho-alpha-D-ribose 1-diphosphate + ATP. Its pathway is amino-acid biosynthesis; L-histidine biosynthesis; L-histidine from 5-phospho-alpha-D-ribose 1-diphosphate: step 1/9. Its function is as follows. Catalyzes the condensation of ATP and 5-phosphoribose 1-diphosphate to form N'-(5'-phosphoribosyl)-ATP (PR-ATP). Has a crucial role in the pathway because the rate of histidine biosynthesis seems to be controlled primarily by regulation of HisG enzymatic activity. The polypeptide is ATP phosphoribosyltransferase (Thermotoga neapolitana (strain ATCC 49049 / DSM 4359 / NBRC 107923 / NS-E)).